A 250-amino-acid polypeptide reads, in one-letter code: Vacuolar protein sorting-associated protein 22 homolog 1 (250 aa).

Residues Met-35–Asn-55 adopt a coiled-coil conformation.

The protein belongs to the SNF8 family. As to quaternary structure, component of the endosomal sorting complex required for transport II (ESCRT-II), composed of VPS22, VPS25 and VPS36.

Its subcellular location is the endosome. Component of the endosomal sorting complex required for transport II (ESCRT-II), which is required for multivesicular body (MVB) formation and sorting of endosomal cargo proteins into MVBs. The ESCRT-II complex is probably involved in the recruitment of the ESCRT-III complex. The protein is Vacuolar protein sorting-associated protein 22 homolog 1 (VP22-1) of Arabidopsis thaliana (Mouse-ear cress).